The primary structure comprises 138 residues: Ribosome-binding factor A (138 aa).

A disordered region spans residues 119 to 138 (DMDEKKNSDEKRDSDEKLED).

Belongs to the RbfA family. As to quaternary structure, monomer. Binds 30S ribosomal subunits, but not 50S ribosomal subunits or 70S ribosomes.

Its subcellular location is the cytoplasm. In terms of biological role, one of several proteins that assist in the late maturation steps of the functional core of the 30S ribosomal subunit. Associates with free 30S ribosomal subunits (but not with 30S subunits that are part of 70S ribosomes or polysomes). Required for efficient processing of 16S rRNA. May interact with the 5'-terminal helix region of 16S rRNA. In Alkaliphilus metalliredigens (strain QYMF), this protein is Ribosome-binding factor A.